The sequence spans 176 residues: Cytochrome b (176 aa).

The next 3 helical transmembrane spans lie at 33–53 (FGSL…FLAM), 77–98 (WLLR…YLHI), and 113–133 (WNVG…GYVL). The heme b site is built by His83 and His97.

The protein belongs to the cytochrome b family. The cytochrome bc1 complex contains 11 subunits: 3 respiratory subunits (MT-CYB, CYC1 and UQCRFS1), 2 core proteins (UQCRC1 and UQCRC2) and 6 low-molecular weight proteins (UQCRH/QCR6, UQCRB/QCR7, UQCRQ/QCR8, UQCR10/QCR9, UQCR11/QCR10 and a cleavage product of UQCRFS1). This cytochrome bc1 complex then forms a dimer. It depends on heme b as a cofactor.

The protein localises to the mitochondrion inner membrane. Its function is as follows. Component of the ubiquinol-cytochrome c reductase complex (complex III or cytochrome b-c1 complex) that is part of the mitochondrial respiratory chain. The b-c1 complex mediates electron transfer from ubiquinol to cytochrome c. Contributes to the generation of a proton gradient across the mitochondrial membrane that is then used for ATP synthesis. The protein is Cytochrome b (MT-CYB) of Eumops glaucinus (Wagner's mastiff bat).